Here is a 263-residue protein sequence, read N- to C-terminus: 5'-nucleotidase SurE (263 aa).

The a divalent metal cation site is built by Asp-8, Asp-9, Ser-40, and Asn-93.

Belongs to the SurE nucleotidase family. A divalent metal cation is required as a cofactor.

The protein localises to the cytoplasm. It carries out the reaction a ribonucleoside 5'-phosphate + H2O = a ribonucleoside + phosphate. Functionally, nucleotidase that shows phosphatase activity on nucleoside 5'-monophosphates. This is 5'-nucleotidase SurE from Caulobacter vibrioides (strain ATCC 19089 / CIP 103742 / CB 15) (Caulobacter crescentus).